The following is a 382-amino-acid chain: Queuine tRNA-ribosyltransferase (382 aa).

The active-site Proton acceptor is D93. Substrate-binding positions include 93–97 (DSGGF), D147, Q191, and G218. Positions 249-255 (GVGKPED) are RNA binding. Residue D268 is the Nucleophile of the active site. The interval 273–277 (TRNAR) is RNA binding; important for wobble base 34 recognition. Residues C306, C308, C311, and H337 each contribute to the Zn(2+) site.

It belongs to the queuine tRNA-ribosyltransferase family. Homodimer. Within each dimer, one monomer is responsible for RNA recognition and catalysis, while the other monomer binds to the replacement base PreQ1. The cofactor is Zn(2+).

It catalyses the reaction 7-aminomethyl-7-carbaguanine + guanosine(34) in tRNA = 7-aminomethyl-7-carbaguanosine(34) in tRNA + guanine. It participates in tRNA modification; tRNA-queuosine biosynthesis. Catalyzes the base-exchange of a guanine (G) residue with the queuine precursor 7-aminomethyl-7-deazaguanine (PreQ1) at position 34 (anticodon wobble position) in tRNAs with GU(N) anticodons (tRNA-Asp, -Asn, -His and -Tyr). Catalysis occurs through a double-displacement mechanism. The nucleophile active site attacks the C1' of nucleotide 34 to detach the guanine base from the RNA, forming a covalent enzyme-RNA intermediate. The proton acceptor active site deprotonates the incoming PreQ1, allowing a nucleophilic attack on the C1' of the ribose to form the product. After dissociation, two additional enzymatic reactions on the tRNA convert PreQ1 to queuine (Q), resulting in the hypermodified nucleoside queuosine (7-(((4,5-cis-dihydroxy-2-cyclopenten-1-yl)amino)methyl)-7-deazaguanosine). The chain is Queuine tRNA-ribosyltransferase from Haemophilus influenzae (strain 86-028NP).